We begin with the raw amino-acid sequence, 134 residues long: Thioredoxin H2-2 (134 aa).

The disordered stretch occupies residues Met-1–Asp-20. Positions Ser-3–Ser-130 constitute a Thioredoxin domain. Catalysis depends on nucleophile residues Cys-56 and Cys-59. A disulfide bridge connects residues Cys-56 and Cys-59.

Belongs to the thioredoxin family. Plant H-type subfamily.

Its subcellular location is the cytoplasm. Its function is as follows. Probable thiol-disulfide oxidoreductase that may be involved in the redox regulation of a number of cytosolic enzymes. This chain is Thioredoxin H2-2, found in Oryza sativa subsp. japonica (Rice).